A 187-amino-acid polypeptide reads, in one-letter code: Protein GrpE (187 aa).

Residues 1–26 form a disordered region; it reads MHDPKESLETNIQETESQEKLPETPI.

It belongs to the GrpE family. In terms of assembly, homodimer.

Its subcellular location is the cytoplasm. Its function is as follows. Participates actively in the response to hyperosmotic and heat shock by preventing the aggregation of stress-denatured proteins, in association with DnaK and GrpE. It is the nucleotide exchange factor for DnaK and may function as a thermosensor. Unfolded proteins bind initially to DnaJ; upon interaction with the DnaJ-bound protein, DnaK hydrolyzes its bound ATP, resulting in the formation of a stable complex. GrpE releases ADP from DnaK; ATP binding to DnaK triggers the release of the substrate protein, thus completing the reaction cycle. Several rounds of ATP-dependent interactions between DnaJ, DnaK and GrpE are required for fully efficient folding. The polypeptide is Protein GrpE (Dichelobacter nodosus (strain VCS1703A)).